Reading from the N-terminus, the 74-residue chain is NADH dehydrogenase [ubiquinone] 1 alpha subcomplex assembly factor 8 (74 aa).

Residues 22 to 69 form the CHCH domain; that stretch reads LAACGAEAAAYGRCVQASTAPGGRLSKDFCAREFEALRSCFAAAAKKT. 2 consecutive short sequence motifs (cx9C motif) follow at residues 25 to 35 and 51 to 61; these read CGAEAAAYGRC and CAREFEALRSC. 2 disulfide bridges follow: cysteine 25/cysteine 61 and cysteine 35/cysteine 51.

Interacts with NDUFAF5.

Its subcellular location is the mitochondrion. Involved in the assembly of mitochondrial NADH:ubiquinone oxidoreductase complex (complex I, MT-ND1). Required to stabilize NDUFAF5. The polypeptide is NADH dehydrogenase [ubiquinone] 1 alpha subcomplex assembly factor 8 (Homo sapiens (Human)).